The chain runs to 219 residues: 3,4-dihydroxy-2-butanone 4-phosphate synthase (219 aa).

D-ribulose 5-phosphate-binding positions include 37–38 (RE), Asp-42, 150–154 (RRGHT), and Glu-174. Glu-38 provides a ligand contact to Mg(2+). Residue His-153 coordinates Mg(2+).

Belongs to the DHBP synthase family. Homodimer. Mg(2+) is required as a cofactor. Mn(2+) serves as cofactor.

The enzyme catalyses D-ribulose 5-phosphate = (2S)-2-hydroxy-3-oxobutyl phosphate + formate + H(+). The protein operates within cofactor biosynthesis; riboflavin biosynthesis; 2-hydroxy-3-oxobutyl phosphate from D-ribulose 5-phosphate: step 1/1. Catalyzes the conversion of D-ribulose 5-phosphate to formate and 3,4-dihydroxy-2-butanone 4-phosphate. The protein is 3,4-dihydroxy-2-butanone 4-phosphate synthase of Oleidesulfovibrio alaskensis (strain ATCC BAA-1058 / DSM 17464 / G20) (Desulfovibrio alaskensis).